A 365-amino-acid polypeptide reads, in one-letter code: Paraneoplastic antigen Ma2 homolog (365 aa).

The residue at position 2 (alanine 2) is an N-acetylalanine. Positions 336–365 (EEEDAYFEQESREEPGEREGSGCWNNSRNN) are disordered. The segment covering 344-355 (QESREEPGEREG) has biased composition (basic and acidic residues).

The protein belongs to the PNMA family. In terms of tissue distribution, expressed in the cerebrum, cerebellum and testis.

It localises to the nucleus. It is found in the nucleolus. This Mus musculus (Mouse) protein is Paraneoplastic antigen Ma2 homolog (Pnma2).